The sequence spans 726 residues: Sensory/regulatory protein RpfC (726 aa).

The next 5 membrane-spanning stretches (helical) occupy residues 23–40, 52–72, 95–115, 128–148, and 152–172; these read NLIR…LGWR, TWLI…AILL, IMAI…WVTI, AATA…PYWK, and YLSW…DSLL. The Histidine kinase domain maps to 195–417; the sequence is NMSHEFRTPL…VFWFELPMAI (223 aa). Phosphohistidine; by autocatalysis is present on H198. The Response regulatory domain maps to 463–581; the sequence is RMLVADDHEA…KLLDTLADLA (119 aa). The residue at position 512 (D512) is a 4-aspartylphosphate. The 94-residue stretch at 618–711 folds into the HPt domain; sequence GEEFERQFVR…KAGKDALDAR (94 aa). Phosphohistidine is present on H657.

In terms of assembly, at low DSF concentrations, interacts with RpfF. Post-translationally, autophosphorylated. Activation may require a sequential transfer of a phosphate group from a His in the primary transmitter domain, to an Asp in the receiver domain and to a His in the secondary transmitter domain.

The protein resides in the cell inner membrane. The catalysed reaction is ATP + protein L-histidine = ADP + protein N-phospho-L-histidine.. Binding of DSF to the sensor region causes allosteric change, which facilitates RpfC autophosphorylation. In terms of biological role, hybrid sensor kinase that regulates diverse biological functions through two distinct molecular mechanisms. At low cell density, the extracellular concentration of the diffusible signaling factor (DSF) is below a threshold, and unphosphorylated RpfC is involved in the negative regulation of DSF synthesis, via direct interaction with the DSF synthase RpfF. Interaction prevents synthesis of DSF, which remains at a basal level. This activity does not involve the phosphorelay mechanism and is not dependent on RpfG. Is also member of the two-component regulatory system RpfG/RpfC, which is involved in the perception and response to DSF, which is essential for cell-cell signaling. At high cell density, the level of extracellular DSF increases and binding of DSF to the sensor region of RpfC causes autophosphorylation of RpfC, which results in the release of RpfF and the activation of RpfG via a four-step phosphorelay. Activation of RpfG leads to the positive regulation of biofilm dispersal and the production of virulence factors. This chain is Sensory/regulatory protein RpfC (rpfC), found in Xanthomonas campestris pv. campestris (strain ATCC 33913 / DSM 3586 / NCPPB 528 / LMG 568 / P 25).